The sequence spans 49 residues: Large ribosomal subunit protein bL33B (49 aa).

This sequence belongs to the bacterial ribosomal protein bL33 family.

The protein is Large ribosomal subunit protein bL33B of Lactobacillus gasseri (strain ATCC 33323 / DSM 20243 / BCRC 14619 / CIP 102991 / JCM 1131 / KCTC 3163 / NCIMB 11718 / NCTC 13722 / AM63).